We begin with the raw amino-acid sequence, 86 residues long: Mu-theraphotoxin-Cg2a 2 (86 aa).

Positions 1-21 are cleaved as a signal peptide; sequence MKVSVVITLAVLGVMFVWASA. A propeptide spanning residues 22-50 is cleaved from the precursor; sequence AELEERGSDQRDSPAWIKSMERIFQSEER. Disulfide bonds link cysteine 52/cysteine 66, cysteine 59/cysteine 71, and cysteine 65/cysteine 78. A Phenylalanine amide modification is found at phenylalanine 84.

This sequence belongs to the neurotoxin 10 (Hwtx-1) family. 37 (Jztx-31) subfamily. Expressed by the venom gland.

The protein resides in the secreted. Its function is as follows. Inhibits both peak current and fast inactivation of voltage-gated sodium channels (Nav) channels. Inhibits the inactivation of Nav on DRG neurons (EC(50)=1.77 uM) and peak current of cardiac myocytes (IC(50)=0.90 uM). The polypeptide is Mu-theraphotoxin-Cg2a 2 (Chilobrachys guangxiensis (Chinese earth tiger tarantula)).